Here is a 211-residue protein sequence, read N- to C-terminus: Probable nicotinate-nucleotide adenylyltransferase (211 aa).

Belongs to the NadD family.

It catalyses the reaction nicotinate beta-D-ribonucleotide + ATP + H(+) = deamido-NAD(+) + diphosphate. It participates in cofactor biosynthesis; NAD(+) biosynthesis; deamido-NAD(+) from nicotinate D-ribonucleotide: step 1/1. Catalyzes the reversible adenylation of nicotinate mononucleotide (NaMN) to nicotinic acid adenine dinucleotide (NaAD). The polypeptide is Probable nicotinate-nucleotide adenylyltransferase (Shewanella sediminis (strain HAW-EB3)).